Consider the following 156-residue polypeptide: Transcription factor E (156 aa).

Residues 1–72 (MYGEKAKKVL…LWILNIDQIE (72 aa)) enclose the HTH TFE/IIEalpha-type domain.

The protein belongs to the TFE family. In terms of assembly, monomer. Interaction with RNA polymerase subunits RpoF and RpoE is necessary for Tfe stimulatory transcription activity. Able to interact with Tbp and RNA polymerase in the absence of DNA promoter. Interacts both with the preinitiation and elongation complexes.

Functionally, transcription factor that plays a role in the activation of archaeal genes transcribed by RNA polymerase. Facilitates transcription initiation by enhancing TATA-box recognition by TATA-box-binding protein (Tbp), and transcription factor B (Tfb) and RNA polymerase recruitment. Not absolutely required for transcription in vitro, but particularly important in cases where Tbp or Tfb function is not optimal. It dynamically alters the nucleic acid-binding properties of RNA polymerases by stabilizing the initiation complex and destabilizing elongation complexes. Seems to translocate with the RNA polymerase following initiation and acts by binding to the non template strand of the transcription bubble in elongation complexes. The polypeptide is Transcription factor E (Staphylothermus marinus (strain ATCC 43588 / DSM 3639 / JCM 9404 / F1)).